The chain runs to 58 residues: U8-ctenitoxin-Pr1a (58 aa).

Disulfide bonds link C2-C16, C9-C22, C15-C40, C24-C38, and C48-C55.

In terms of tissue distribution, expressed by the venom gland.

It localises to the secreted. Its function is as follows. No toxic effects on mice at dose levels of 5 ug per mouse. May be toxic to insects. This Phoneutria reidyi (Brazilian Amazonian armed spider) protein is U8-ctenitoxin-Pr1a.